Here is a 255-residue protein sequence, read N- to C-terminus: Protein PH0439 (255 aa).

Belongs to the CinA family.

This Pyrococcus horikoshii (strain ATCC 700860 / DSM 12428 / JCM 9974 / NBRC 100139 / OT-3) protein is Protein PH0439.